The chain runs to 137 residues: Large ribosomal subunit protein uL16 (137 aa).

Belongs to the universal ribosomal protein uL16 family. In terms of assembly, part of the 50S ribosomal subunit.

In terms of biological role, binds 23S rRNA and is also seen to make contacts with the A and possibly P site tRNAs. The sequence is that of Large ribosomal subunit protein uL16 from Nitrobacter winogradskyi (strain ATCC 25391 / DSM 10237 / CIP 104748 / NCIMB 11846 / Nb-255).